The sequence spans 202 residues: MGFWGTYLLFCLFSFLSQLTAESPTPKAKKAANAKKDLVSSKMFEELKNRMDVLAQEVALLKEKQALQTVCLKGTKVNLKCLLAFTQPKTFHEASEDCISQGGTLGTPQSELENEALFEYARHSVGNDANIWLGLNDMAAEGAWVDMTGGLLAYKNWETEITTQPDGGKAENCAALSGAANGKWFDKRCRDQLPYICQFAIV.

An N-terminal signal peptide occupies residues 1–21; it reads MGFWGTYLLFCLFSFLSQLTA. 3 disulfide bridges follow: C71-C81, C98-C197, and C173-C189. Positions 77–198 constitute a C-type lectin domain; sequence VNLKCLLAFT…CRDQLPYICQ (122 aa).

Homotrimer. In terms of tissue distribution, highest expression in lung, skeletal muscle and heart. Expressed in retina.

The protein localises to the secreted. Tetranectin binds to plasminogen and to isolated kringle 4. May be involved in the packaging of molecules destined for exocytosis. Plays a role in retinal function. In Mus musculus (Mouse), this protein is Tetranectin (Clec3b).